Reading from the N-terminus, the 649-residue chain is MAPRVATGTPEPNGGGGGKIDNTVEITPTSNGQVGTLGDAVPTEQLQGEREREREGEGDAGGDGLGSSLSLAVPPGPLSFEALLAQVGALGGGQQLQLGLCCLPVLFVALGMASDPIFTLAPPLHCHYGAFPPNASGWEQPPNASGVSVASAALAASAASRVATSTDPSCSGFAPPDFNHCLKDWDYNGLPVLTTNAIGQWDLVCDLGWQVILEQILFILGFASGYLFLGYPADRFGRRGIVLLTLGLVGPCGVGGAAAGSSTGVMALRFLLGFLLAGVDLGVYLMRLELCDPTQRLRVALAGELVGVGGHFLFLGLALVSKDWRFLQRMITAPCILFLFYGWPGLFLESARWLIVKRQIEEAQSVLRILAERNRPHGQMLGEEAQEALQDLENTCPLPATSSFSFASLLNYRNIWKNLLILGFTNFIAHAIRHCYQPVGGGGSPSDFYLCSLLASGTAALACVFLGVTVDRFGRRGILLLSMTLTGIASLVLLGLWDCEHPIFPTVWAQQGNPNRDLNEAAITTFSVLGLFSSQAAAILSTLLAAEVIPTTVRGRGLGLIMALGALGGLSGPAQRLHMGHGAFLQHVVLAACALLCILSIMLLPETKRKLLPEVLRDGELCRRPSLLRQPPPTRCDHVPLLATPNPAL.

Positions 1–70 (MAPRVATGTP…GGDGLGSSLS (70 aa)) are disordered. Polar residues predominate over residues 24 to 34 (VEITPTSNGQV). The segment covering 47 to 57 (QGEREREREGE) has biased composition (basic and acidic residues). N-linked (GlcNAc...) asparagine glycans are attached at residues N134 and N143. 11 helical membrane passes run 211–231 (VILE…FLGY), 240–260 (GIVL…AAAG), 265–285 (VMAL…GVYL), 300–320 (ALAG…LALV), 330–350 (MITA…FLES), 414–433 (NIWK…HAIR), 448–468 (FYLC…FLGV), 477–497 (GILL…LGLW), 526–546 (FSVL…LLAA), 557–577 (GLGL…AQRL), and 584–604 (FLQH…IMLL).

It belongs to the major facilitator (TC 2.A.1) superfamily. Organic cation transporter (TC 2.A.1.19) family. Expressed in brain.

It is found in the cell membrane. It localises to the vacuole membrane. Its function is as follows. Cell surface receptor for LCN2 (24p3) that plays a key role in iron homeostasis and transport. Able to bind iron-bound LCN2 (holo-24p3), followed by internalization of holo-24p3 and release of iron, thereby increasing intracellular iron concentration and leading to inhibition of apoptosis. Also binds iron-free LCN2 (apo-24p3), followed by internalization of apo-24p3 and its association with an intracellular siderophore, leading to iron chelation and iron transfer to the extracellular medium, thereby reducing intracellular iron concentration and resulting in apoptosis. The polypeptide is Solute carrier family 22 member 17 (SLC22A17) (Homo sapiens (Human)).